The sequence spans 434 residues: Trigger factor (434 aa).

One can recognise a PPIase FKBP-type domain in the interval 161–246; it reads EDRVVIDFTG…VKQVQAPVLP (86 aa).

Belongs to the FKBP-type PPIase family. Tig subfamily.

It localises to the cytoplasm. It catalyses the reaction [protein]-peptidylproline (omega=180) = [protein]-peptidylproline (omega=0). Involved in protein export. Acts as a chaperone by maintaining the newly synthesized protein in an open conformation. Functions as a peptidyl-prolyl cis-trans isomerase. This is Trigger factor from Dechloromonas aromatica (strain RCB).